The primary structure comprises 207 residues: Uracil phosphoribosyltransferase (207 aa).

5-phospho-alpha-D-ribose 1-diphosphate is bound by residues arginine 77, arginine 102, and 129-137; that span reads DPMLATGVS. Uracil-binding positions include isoleucine 192 and 197–199; that span reads GDA. 5-phospho-alpha-D-ribose 1-diphosphate is bound at residue aspartate 198.

This sequence belongs to the UPRTase family. Mg(2+) is required as a cofactor.

The catalysed reaction is UMP + diphosphate = 5-phospho-alpha-D-ribose 1-diphosphate + uracil. It participates in pyrimidine metabolism; UMP biosynthesis via salvage pathway; UMP from uracil: step 1/1. Its activity is regulated as follows. Allosterically activated by GTP. Catalyzes the conversion of uracil and 5-phospho-alpha-D-ribose 1-diphosphate (PRPP) to UMP and diphosphate. The sequence is that of Uracil phosphoribosyltransferase from Fervidobacterium nodosum (strain ATCC 35602 / DSM 5306 / Rt17-B1).